Consider the following 47-residue polypeptide: Defensin-like protein 1 (47 aa).

4 cysteine pairs are disulfide-bonded: cysteine 5/cysteine 47, cysteine 16/cysteine 36, cysteine 22/cysteine 43, and cysteine 26/cysteine 45.

This sequence belongs to the DEFL family.

Fabatins have antibacterial activity against Gram-positive and Gram-negative bacteria. High activity against P.aeruginosa. No activity against S.cerevisiae and C.albicans. The chain is Defensin-like protein 1 from Vicia faba (Broad bean).